The following is a 279-amino-acid chain: Thymidylate synthase (279 aa).

Residue 133-134 (RR) participates in dUMP binding. Cys154 serves as the catalytic Nucleophile. DUMP-binding positions include 178-181 (RSND), Asn189, and 219-221 (HIY). Asp181 contacts (6R)-5,10-methylene-5,6,7,8-tetrahydrofolate. Ala278 lines the (6R)-5,10-methylene-5,6,7,8-tetrahydrofolate pocket.

The protein belongs to the thymidylate synthase family. Bacterial-type ThyA subfamily. In terms of assembly, homodimer.

It localises to the cytoplasm. The enzyme catalyses dUMP + (6R)-5,10-methylene-5,6,7,8-tetrahydrofolate = 7,8-dihydrofolate + dTMP. It functions in the pathway pyrimidine metabolism; dTTP biosynthesis. In terms of biological role, catalyzes the reductive methylation of 2'-deoxyuridine-5'-monophosphate (dUMP) to 2'-deoxythymidine-5'-monophosphate (dTMP) while utilizing 5,10-methylenetetrahydrofolate (mTHF) as the methyl donor and reductant in the reaction, yielding dihydrofolate (DHF) as a by-product. This enzymatic reaction provides an intracellular de novo source of dTMP, an essential precursor for DNA biosynthesis. The polypeptide is Thymidylate synthase (Streptococcus gordonii (strain Challis / ATCC 35105 / BCRC 15272 / CH1 / DL1 / V288)).